The sequence spans 664 residues: Glycine--tRNA ligase beta subunit (664 aa).

It belongs to the class-II aminoacyl-tRNA synthetase family. Tetramer of two alpha and two beta subunits.

The protein localises to the cytoplasm. The catalysed reaction is tRNA(Gly) + glycine + ATP = glycyl-tRNA(Gly) + AMP + diphosphate. In Rickettsia felis (strain ATCC VR-1525 / URRWXCal2) (Rickettsia azadi), this protein is Glycine--tRNA ligase beta subunit.